The sequence spans 569 residues: Peroxynitrite isomerase THAP4 (569 aa).

The THAP-type zinc-finger motif lies at 1 to 85 (MVICCAAVNC…LKPTAVPSIF (85 aa)). The tract at residues 88–216 (SEKKRGAGGH…DKSGISMDDF (129 aa)) is disordered. 2 stretches are compositionally biased toward polar residues: residues 121-130 (IGSSLSSSDN) and 157-167 (AVSQEQGQSLE). Phosphoserine is present on serine 159. The short motif at 230–233 (LHSY) is the HCFC1-binding motif (HBM) element. Residue serine 234 is modified to Phosphoserine. Positions 235 to 312 (FSSKHTRERP…EAVQSEHSDA (78 aa)) are disordered. Positions 242-262 (ERPSVPREPMDRKRLKREMEP) are enriched in basic and acidic residues. The segment covering 265-279 (SGNSVAQSPPSSSLT) has biased composition (polar residues). Residues 280 to 289 (ATPQKASQSP) show a composition bias toward low complexity. The segment at 407 to 569 (PPKLNPVVEP…LHITYKKVTP (163 aa)) is nitrobindin. Residues threonine 436 and histidine 559 each coordinate heme b.

This sequence in the C-terminal section; belongs to the nitrobindin family. Homodimer. The cofactor is heme b.

The protein localises to the cytoplasm. The protein resides in the nucleus. The enzyme catalyses peroxynitrite = nitrate. Its pathway is nitrogen metabolism. Heme-binding protein able to scavenge peroxynitrite and to protect free L-tyrosine against peroxynitrite-mediated nitration, by acting as a peroxynitrite isomerase that converts peroxynitrite to nitrate. Therefore, this protein likely plays a role in peroxynitrite sensing and in the detoxification of reactive nitrogen and oxygen species (RNS and ROS, respectively). Is able to bind nitric oxide (NO) in vitro, but may act as a sensor of peroxynitrite levels in vivo, possibly modulating the transcriptional activity residing in the N-terminal region. The chain is Peroxynitrite isomerase THAP4 from Mus musculus (Mouse).